Here is a 167-residue protein sequence, read N- to C-terminus: Biogenesis of lysosome-related organelles complex 1 subunit 6 (167 aa).

A compositionally biased stretch (polar residues) spans 1 to 11 (MLKSSNINSVL). The interval 1–38 (MLKSSNINSVLNELPNDPARDSTAQSSHNGKPKQDAET) is disordered. Residues 102 to 160 (ARLNDMMSDVKRYKDKLTKIKKEMQGVYQRTKELKKRAANVAACKQRDYQRKLERLQHE) adopt a coiled-coil conformation.

It belongs to the BLOC1S6 family. As to quaternary structure, component of the biogenesis of lysosome-related organelles complex-1 (BLOC-1) composed of Blos1, Blos2, Blos3, Blos4, Dysb, Muted, Pldn and Snapin. Interacts with Blos1, Blos4 and Dysb.

It is found in the synapse. The protein resides in the cytoplasm. Its subcellular location is the cytoskeleton. It localises to the myofibril. The protein localises to the sarcomere. It is found in the z line. Its function is as follows. Component of the biogenesis of lysosome-related organelles complex-1 (BLOC-1) involved in pigment granule biogenesis and membrane trafficking in synapses. In response to high synaptic activity at neuromuscular junctions, plays a key role in promoting efficient synaptic vesicle recycling and re-formation through early endosomes. This Drosophila melanogaster (Fruit fly) protein is Biogenesis of lysosome-related organelles complex 1 subunit 6.